The chain runs to 208 residues: ATP-dependent Clp protease proteolytic subunit (208 aa).

The Nucleophile role is filled by S107. H132 is an active-site residue.

This sequence belongs to the peptidase S14 family. In terms of assembly, fourteen ClpP subunits assemble into 2 heptameric rings which stack back to back to give a disk-like structure with a central cavity, resembling the structure of eukaryotic proteasomes.

The protein resides in the cytoplasm. It carries out the reaction Hydrolysis of proteins to small peptides in the presence of ATP and magnesium. alpha-casein is the usual test substrate. In the absence of ATP, only oligopeptides shorter than five residues are hydrolyzed (such as succinyl-Leu-Tyr-|-NHMec, and Leu-Tyr-Leu-|-Tyr-Trp, in which cleavage of the -Tyr-|-Leu- and -Tyr-|-Trp bonds also occurs).. In terms of biological role, cleaves peptides in various proteins in a process that requires ATP hydrolysis. Has a chymotrypsin-like activity. Plays a major role in the degradation of misfolded proteins. The protein is ATP-dependent Clp protease proteolytic subunit of Jannaschia sp. (strain CCS1).